The sequence spans 414 residues: Gamma-glutamyl phosphate reductase (414 aa).

This sequence belongs to the gamma-glutamyl phosphate reductase family.

Its subcellular location is the cytoplasm. The catalysed reaction is L-glutamate 5-semialdehyde + phosphate + NADP(+) = L-glutamyl 5-phosphate + NADPH + H(+). Its pathway is amino-acid biosynthesis; L-proline biosynthesis; L-glutamate 5-semialdehyde from L-glutamate: step 2/2. Functionally, catalyzes the NADPH-dependent reduction of L-glutamate 5-phosphate into L-glutamate 5-semialdehyde and phosphate. The product spontaneously undergoes cyclization to form 1-pyrroline-5-carboxylate. This Geobacillus thermodenitrificans (strain NG80-2) protein is Gamma-glutamyl phosphate reductase.